The sequence spans 715 residues: Polyribonucleotide nucleotidyltransferase (715 aa).

Aspartate 489 and aspartate 495 together coordinate Mg(2+). The 60-residue stretch at proline 556–isoleucine 615 folds into the KH domain. The S1 motif domain occupies glycine 625–arginine 693.

The protein belongs to the polyribonucleotide nucleotidyltransferase family. The cofactor is Mg(2+).

The protein localises to the cytoplasm. It catalyses the reaction RNA(n+1) + phosphate = RNA(n) + a ribonucleoside 5'-diphosphate. Its function is as follows. Involved in mRNA degradation. Catalyzes the phosphorolysis of single-stranded polyribonucleotides processively in the 3'- to 5'-direction. The polypeptide is Polyribonucleotide nucleotidyltransferase (Beijerinckia indica subsp. indica (strain ATCC 9039 / DSM 1715 / NCIMB 8712)).